We begin with the raw amino-acid sequence, 574 residues long: Fusion glycoprotein F0 (574 aa).

The N-terminal stretch at 1–25 (MATTAMRMIISIIFISTYVTHITLC) is a signal peptide. The Extracellular segment spans residues 26–524 (QNITEEFYQS…SVDVGKSTTN (499 aa)). 2 N-linked (GlcNAc...) asparagine; by host glycosylation sites follow: Asn-27 and Asn-70. 7 disulfide bridges follow: Cys-37–Cys-439, Cys-69–Cys-212, Cys-313–Cys-343, Cys-322–Cys-333, Cys-358–Cys-367, Cys-382–Cys-393, and Cys-416–Cys-422. The stretch at 76–96 (VKLIKQELERYNNAVVELQSL) forms a coiled coil. Asn-120 is a glycosylation site (N-linked (GlcNAc...) asparagine; by host). The interval 137 to 157 (FLGFLLGIGSAIASGVAVSKV) is fusion peptide. Residues 158–209 (LHLEGEVNKIKNALLSTNKAVVSLSNGVSVLTSKVLDLKNYIDKELLPKVNN) adopt a coiled-coil conformation. Residues 481–516 (LVFPSDEFDASIAQVNAKINQSLAFIRRSDELLHSV) are a coiled coil. Residue Asn-500 is glycosylated (N-linked (GlcNAc...) asparagine; by host). The helical transmembrane segment at 525-550 (VVITTIIIVIVVVILMLIAVGLLFYS) threads the bilayer. Topologically, residues 551–574 (KTRSTPIMLGKDQLSGINNLSFSK) are cytoplasmic.

It belongs to the paramyxoviruses fusion glycoprotein family. Homotrimer. Heterodimer with fusion protein F2; disulfide-linked. Part of a complex composed of F1, F2 and G glycoproteins. As a heterodimer with F2, interacts with host RHOA; this interaction facilitates virus-induced syncytium formation. In terms of assembly, homotrimer. Heterodimer with fusion protein F1; disulfide-linked. Part of a complex composed of F1, F2 and G glycoproteins. As a heterodimer with F1, interacts with host RHOA; this interaction facilitates virus-induced syncytium formation. In terms of processing, the F glycoprotein is synthesized as a F0 inactive precursor that is heavily N-glycosylated and processed at two sites by a host furin-like protease probably in the Golgi. The cleavage site between p27 and F1 may occur after endocytosis to yield the mature F1 and F2 proteins. Both cleavages are required for membrane fusion and p27 is released from the processed protein.

It localises to the host Golgi apparatus membrane. The protein localises to the virion membrane. The protein resides in the host cell membrane. Inactive precursor that is cleaved at two sites by a furin-like protease to give rise to the mature F1 and F2 fusion glycoproteins. Its function is as follows. Class I viral fusion protein. Under the current model, the protein has at least 3 conformational states: pre-fusion native state, pre-hairpin intermediate state, and post-fusion hairpin state. During viral and plasma cell membrane fusion, the coiled coil regions assume a trimer-of-hairpins structure, positioning the fusion peptide in close proximity to the C-terminal region of the ectodomain. The formation of this structure appears to drive apposition and subsequent fusion of viral and cellular membranes leading to delivery of the nucleocapsid into the cytoplasm. This fusion is pH independent and occurs at the plasma or endosomal membrane. The trimer of F1-F2 (F protein) also facilitates the attachment and entry into the host cell. Later in infection, F protein expressed at the plasma membrane of infected cells can mediate fusion with adjacent cells to form syncytia, a cytopathic effect that could lead to tissue necrosis. Functionally, major determinant of the species specificity of RSV infection. The trimer of F1-F2 (F protein) also facilitates the attachment and entry into the host cell. Later in infection, F protein expressed at the plasma membrane of infected cells can mediate fusion with adjacent cells to form syncytia, a cytopathic effect that could lead to tissue necrosis. The protein is Fusion glycoprotein F0 (F) of Bos taurus (Bovine).